The following is a 330-amino-acid chain: DNA-directed RNA polymerase subunit alpha (330 aa).

The alpha N-terminal domain (alpha-NTD) stretch occupies residues 1–232 (MAILAFQKPD…YHFMLFSDEK (232 aa)). The tract at residues 248 to 330 (EEVLHMRQLL…DISKYKLDKE (83 aa)) is alpha C-terminal domain (alpha-CTD).

The protein belongs to the RNA polymerase alpha chain family. In terms of assembly, homodimer. The RNAP catalytic core consists of 2 alpha, 1 beta, 1 beta' and 1 omega subunit. When a sigma factor is associated with the core the holoenzyme is formed, which can initiate transcription.

It catalyses the reaction RNA(n) + a ribonucleoside 5'-triphosphate = RNA(n+1) + diphosphate. DNA-dependent RNA polymerase catalyzes the transcription of DNA into RNA using the four ribonucleoside triphosphates as substrates. The sequence is that of DNA-directed RNA polymerase subunit alpha from Bacteroides fragilis (strain ATCC 25285 / DSM 2151 / CCUG 4856 / JCM 11019 / LMG 10263 / NCTC 9343 / Onslow / VPI 2553 / EN-2).